The following is a 295-amino-acid chain: Transmembrane protein 71 (295 aa).

Transmembrane regions (helical) follow at residues 229-249 (LLQE…ISAC) and 253-273 (FMGE…VAYV).

It belongs to the TMEM71 family.

Its subcellular location is the membrane. The chain is Transmembrane protein 71 (TMEM71) from Homo sapiens (Human).